The sequence spans 925 residues: Protein translocase subunit SecA (925 aa).

ATP-binding positions include Q87, 105-109 (GEGKT), and D512. C910, C912, C921, and H922 together coordinate Zn(2+).

The protein belongs to the SecA family. In terms of assembly, monomer and homodimer. Part of the essential Sec protein translocation apparatus which comprises SecA, SecYEG and auxiliary proteins SecDF-YajC and YidC. The cofactor is Zn(2+).

Its subcellular location is the cell inner membrane. It is found in the cytoplasm. The catalysed reaction is ATP + H2O + cellular proteinSide 1 = ADP + phosphate + cellular proteinSide 2.. Part of the Sec protein translocase complex. Interacts with the SecYEG preprotein conducting channel. Has a central role in coupling the hydrolysis of ATP to the transfer of proteins into and across the cell membrane, serving both as a receptor for the preprotein-SecB complex and as an ATP-driven molecular motor driving the stepwise translocation of polypeptide chains across the membrane. This chain is Protein translocase subunit SecA, found in Psychrobacter sp. (strain PRwf-1).